A 131-amino-acid chain; its full sequence is Small ribosomal subunit protein uS9 (131 aa).

The segment at 102 to 131 is disordered; that stretch reads AGFLTRDPRMKERRKYGLKKARKAPQFSKR. Residues 112 to 131 show a composition bias toward basic residues; sequence KERRKYGLKKARKAPQFSKR.

This sequence belongs to the universal ribosomal protein uS9 family.

This Desulfitobacterium hafniense (strain DSM 10664 / DCB-2) protein is Small ribosomal subunit protein uS9.